The sequence spans 502 residues: Pentatricopeptide repeat-containing protein At4g01990, mitochondrial (502 aa).

Residues 1–13 (MMHSVSRLARRFC) constitute a mitochondrion transit peptide. PPR repeat units follow at residues 139 to 173 (NQST…NHVS), 174 to 208 (NSLP…SITP), 209 to 243 (CDIT…GEGI), 245 to 275 (SWNT…LENN), 280 to 310 (VRDC…LKKR), 315 to 345 (NNSS…WEST), and 350 to 381 (DMRM…MKKC).

The protein belongs to the PPR family. P subfamily.

The protein resides in the mitochondrion. In Arabidopsis thaliana (Mouse-ear cress), this protein is Pentatricopeptide repeat-containing protein At4g01990, mitochondrial.